We begin with the raw amino-acid sequence, 235 residues long: Small ribosomal subunit protein uS10m (235 aa).

The transit peptide at 1 to 19 directs the protein to the mitochondrion; it reads MLRTSVRSPLLYRCLSKRF.

The protein belongs to the universal ribosomal protein uS10 family. Part of the mitochondrial small ribosomal subunit.

Its subcellular location is the mitochondrion. Involved in mitochondrial genome encoded proteins translation. Involved in the binding of tRNA to the ribosomes. The chain is Small ribosomal subunit protein uS10m (RSM10) from Candida glabrata (strain ATCC 2001 / BCRC 20586 / JCM 3761 / NBRC 0622 / NRRL Y-65 / CBS 138) (Yeast).